The primary structure comprises 186 residues: Elongation factor P (186 aa).

This sequence belongs to the elongation factor P family.

It is found in the cytoplasm. It participates in protein biosynthesis; polypeptide chain elongation. In terms of biological role, involved in peptide bond synthesis. Stimulates efficient translation and peptide-bond synthesis on native or reconstituted 70S ribosomes in vitro. Probably functions indirectly by altering the affinity of the ribosome for aminoacyl-tRNA, thus increasing their reactivity as acceptors for peptidyl transferase. This is Elongation factor P from Prochlorococcus marinus (strain MIT 9313).